An 83-amino-acid polypeptide reads, in one-letter code: DNA-directed RNA polymerase subunit Rpo5 (83 aa).

This sequence belongs to the archaeal Rpo5/eukaryotic RPB5 RNA polymerase subunit family. As to quaternary structure, part of the RNA polymerase complex.

It localises to the cytoplasm. The catalysed reaction is RNA(n) + a ribonucleoside 5'-triphosphate = RNA(n+1) + diphosphate. Functionally, DNA-dependent RNA polymerase (RNAP) catalyzes the transcription of DNA into RNA using the four ribonucleoside triphosphates as substrates. In Metallosphaera sedula (strain ATCC 51363 / DSM 5348 / JCM 9185 / NBRC 15509 / TH2), this protein is DNA-directed RNA polymerase subunit Rpo5.